We begin with the raw amino-acid sequence, 119 residues long: Dihydroneopterin aldolase (119 aa).

Residues E21, Y53, and 72 to 73 (IE) contribute to the substrate site. Catalysis depends on K99, which acts as the Proton donor/acceptor.

Belongs to the DHNA family.

The catalysed reaction is 7,8-dihydroneopterin = 6-hydroxymethyl-7,8-dihydropterin + glycolaldehyde. Its pathway is cofactor biosynthesis; tetrahydrofolate biosynthesis; 2-amino-4-hydroxy-6-hydroxymethyl-7,8-dihydropteridine diphosphate from 7,8-dihydroneopterin triphosphate: step 3/4. In terms of biological role, catalyzes the conversion of 7,8-dihydroneopterin to 6-hydroxymethyl-7,8-dihydropterin. The protein is Dihydroneopterin aldolase (folB) of Streptococcus pyogenes serotype M3 (strain ATCC BAA-595 / MGAS315).